A 141-amino-acid polypeptide reads, in one-letter code: Nucleoside diphosphate kinase (141 aa).

ATP-binding residues include lysine 11, phenylalanine 59, arginine 87, threonine 93, arginine 104, and asparagine 114. Histidine 117 acts as the Pros-phosphohistidine intermediate in catalysis.

The protein belongs to the NDK family. In terms of assembly, homotetramer. Mg(2+) is required as a cofactor.

It localises to the cytoplasm. The catalysed reaction is a 2'-deoxyribonucleoside 5'-diphosphate + ATP = a 2'-deoxyribonucleoside 5'-triphosphate + ADP. The enzyme catalyses a ribonucleoside 5'-diphosphate + ATP = a ribonucleoside 5'-triphosphate + ADP. Functionally, major role in the synthesis of nucleoside triphosphates other than ATP. The ATP gamma phosphate is transferred to the NDP beta phosphate via a ping-pong mechanism, using a phosphorylated active-site intermediate. This Pseudomonas fluorescens (strain SBW25) protein is Nucleoside diphosphate kinase.